Here is a 275-residue protein sequence, read N- to C-terminus: Formamidopyrimidine-DNA glycosylase (275 aa).

Pro2 functions as the Schiff-base intermediate with DNA in the catalytic mechanism. Glu3 functions as the Proton donor in the catalytic mechanism. The Proton donor; for beta-elimination activity role is filled by Lys58. DNA contacts are provided by His93, Arg111, and Arg156. An FPG-type zinc finger spans residues 241 to 275; the sequence is FVYDRAGQPCRVCGTPIRQIVQGQRSTYYCPTCQR. Arg265 acts as the Proton donor; for delta-elimination activity in catalysis.

Belongs to the FPG family. Monomer. The cofactor is Zn(2+).

The catalysed reaction is Hydrolysis of DNA containing ring-opened 7-methylguanine residues, releasing 2,6-diamino-4-hydroxy-5-(N-methyl)formamidopyrimidine.. The enzyme catalyses 2'-deoxyribonucleotide-(2'-deoxyribose 5'-phosphate)-2'-deoxyribonucleotide-DNA = a 3'-end 2'-deoxyribonucleotide-(2,3-dehydro-2,3-deoxyribose 5'-phosphate)-DNA + a 5'-end 5'-phospho-2'-deoxyribonucleoside-DNA + H(+). Its function is as follows. Involved in base excision repair of DNA damaged by oxidation or by mutagenic agents. Acts as a DNA glycosylase that recognizes and removes damaged bases. Has a preference for oxidized purines, such as 7,8-dihydro-8-oxoguanine (8-oxoG). Has AP (apurinic/apyrimidinic) lyase activity and introduces nicks in the DNA strand. Cleaves the DNA backbone by beta-delta elimination to generate a single-strand break at the site of the removed base with both 3'- and 5'-phosphates. This Burkholderia cenocepacia (strain ATCC BAA-245 / DSM 16553 / LMG 16656 / NCTC 13227 / J2315 / CF5610) (Burkholderia cepacia (strain J2315)) protein is Formamidopyrimidine-DNA glycosylase.